The following is a 677-amino-acid chain: DNA ligase (677 aa).

Residues 34–38 (DAEYD), 83–84 (SL), and Glu117 contribute to the NAD(+) site. Catalysis depends on Lys119, which acts as the N6-AMP-lysine intermediate. Positions 140, 175, 283, and 307 each coordinate NAD(+). 4 residues coordinate Zn(2+): Cys401, Cys404, Cys419, and Cys425. Residues 594-677 (SHLSLLHGKT…QYISPNTNEN (84 aa)) form the BRCT domain.

It belongs to the NAD-dependent DNA ligase family. LigA subfamily. Requires Mg(2+) as cofactor. Mn(2+) is required as a cofactor.

It catalyses the reaction NAD(+) + (deoxyribonucleotide)n-3'-hydroxyl + 5'-phospho-(deoxyribonucleotide)m = (deoxyribonucleotide)n+m + AMP + beta-nicotinamide D-nucleotide.. Functionally, DNA ligase that catalyzes the formation of phosphodiester linkages between 5'-phosphoryl and 3'-hydroxyl groups in double-stranded DNA using NAD as a coenzyme and as the energy source for the reaction. It is essential for DNA replication and repair of damaged DNA. The sequence is that of DNA ligase from Ehrlichia canis (strain Jake).